Reading from the N-terminus, the 253-residue chain is 5-oxoprolinase subunit A (253 aa).

Belongs to the LamB/PxpA family. As to quaternary structure, forms a complex composed of PxpA, PxpB and PxpC.

The enzyme catalyses 5-oxo-L-proline + ATP + 2 H2O = L-glutamate + ADP + phosphate + H(+). In terms of biological role, catalyzes the cleavage of 5-oxoproline to form L-glutamate coupled to the hydrolysis of ATP to ADP and inorganic phosphate. The sequence is that of 5-oxoprolinase subunit A from Bacillus anthracis (strain A0248).